A 98-amino-acid polypeptide reads, in one-letter code: NADH-ubiquinone oxidoreductase chain 4L (98 aa).

3 helical membrane-spanning segments follow: residues methionine 1–methionine 21, serine 29–leucine 49, and isoleucine 61–valine 81.

The protein belongs to the complex I subunit 4L family. In terms of assembly, core subunit of respiratory chain NADH dehydrogenase (Complex I) which is composed of 45 different subunits.

It localises to the mitochondrion inner membrane. The catalysed reaction is a ubiquinone + NADH + 5 H(+)(in) = a ubiquinol + NAD(+) + 4 H(+)(out). In terms of biological role, core subunit of the mitochondrial membrane respiratory chain NADH dehydrogenase (Complex I) which catalyzes electron transfer from NADH through the respiratory chain, using ubiquinone as an electron acceptor. Part of the enzyme membrane arm which is embedded in the lipid bilayer and involved in proton translocation. This is NADH-ubiquinone oxidoreductase chain 4L (MT-ND4L) from Mesophylla macconnelli (MacConnell's bat).